The following is a 211-amino-acid chain: Probable endopeptidase cgR_2070 (211 aa).

The first 35 residues, 1 to 35, serve as a signal peptide directing secretion; sequence MGKHRRNNSNATRKAVAASAVALGATAAIASPAQA. The region spanning 97 to 211 is the NlpC/P60 domain; it reads ASTGQAIVDA…YMPFHSAVRF (115 aa). The active-site Nucleophile is the Cys-127. The active-site Proton acceptor is the His-175. His-187 is a catalytic residue.

It belongs to the peptidase C40 family.

The protein localises to the secreted. The protein is Probable endopeptidase cgR_2070 of Corynebacterium glutamicum (strain R).